The sequence spans 556 residues: Thermosome subunit beta (556 aa).

Residues 530-556 form a disordered region; it reads LSTDKGDDDGGAGGMGGGMGGGMGGMM. The span at 540 to 556 shows a compositional bias: gly residues; sequence GAGGMGGGMGGGMGGMM.

This sequence belongs to the TCP-1 chaperonin family. As to quaternary structure, forms an oligomeric complex of eight-membered rings.

Its function is as follows. Molecular chaperone; binds unfolded polypeptides in vitro, and has a weak ATPase activity. The polypeptide is Thermosome subunit beta (thsB) (Halobacterium salinarum (strain ATCC 700922 / JCM 11081 / NRC-1) (Halobacterium halobium)).